Reading from the N-terminus, the 178-residue chain is Nucleoside-triphosphatase THEP1 (178 aa).

ATP contacts are provided by residues glycine 9 to alanine 16 and valine 101 to glycine 108.

Belongs to the THEP1 NTPase family.

It carries out the reaction a ribonucleoside 5'-triphosphate + H2O = a ribonucleoside 5'-diphosphate + phosphate + H(+). In terms of biological role, has nucleotide phosphatase activity towards ATP, GTP, CTP, TTP and UTP. May hydrolyze nucleoside diphosphates with lower efficiency. This Thermoplasma volcanium (strain ATCC 51530 / DSM 4299 / JCM 9571 / NBRC 15438 / GSS1) protein is Nucleoside-triphosphatase THEP1.